We begin with the raw amino-acid sequence, 156 residues long: Arginine repressor (156 aa).

It belongs to the ArgR family.

It is found in the cytoplasm. It functions in the pathway amino-acid biosynthesis; L-arginine biosynthesis [regulation]. Regulates arginine biosynthesis genes. The polypeptide is Arginine repressor (Shewanella baltica (strain OS223)).